A 220-amino-acid chain; its full sequence is Deoxyribose-phosphate aldolase (220 aa).

The Proton donor/acceptor role is filled by Asp89. The Schiff-base intermediate with acetaldehyde role is filled by Lys151. The Proton donor/acceptor role is filled by Lys180.

It belongs to the DeoC/FbaB aldolase family. DeoC type 1 subfamily.

The protein localises to the cytoplasm. The enzyme catalyses 2-deoxy-D-ribose 5-phosphate = D-glyceraldehyde 3-phosphate + acetaldehyde. The protein operates within carbohydrate degradation; 2-deoxy-D-ribose 1-phosphate degradation; D-glyceraldehyde 3-phosphate and acetaldehyde from 2-deoxy-alpha-D-ribose 1-phosphate: step 2/2. Functionally, catalyzes a reversible aldol reaction between acetaldehyde and D-glyceraldehyde 3-phosphate to generate 2-deoxy-D-ribose 5-phosphate. The protein is Deoxyribose-phosphate aldolase of Staphylococcus haemolyticus (strain JCSC1435).